Here is a 399-residue protein sequence, read N- to C-terminus: Elongation factor Tu 1 (399 aa).

Residues 10–209 form the tr-type G domain; it reads KPHVNIGTIG…QVDTYIPEPE (200 aa). The G1 stretch occupies residues 19-26; sequence GHVDHGKT. A GTP-binding site is contributed by 19 to 26; sequence GHVDHGKT. Residue Thr-26 coordinates Mg(2+). The G2 stretch occupies residues 60–64; that stretch reads GITIA. The interval 81-84 is G3; it reads DCPG. Residues 81–85 and 136–139 contribute to the GTP site; these read DCPGH and NKAD. A G4 region spans residues 136 to 139; it reads NKAD. The tract at residues 174 to 176 is G5; the sequence is SAL.

It belongs to the TRAFAC class translation factor GTPase superfamily. Classic translation factor GTPase family. EF-Tu/EF-1A subfamily. Monomer.

The protein localises to the cytoplasm. It catalyses the reaction GTP + H2O = GDP + phosphate + H(+). Functionally, GTP hydrolase that promotes the GTP-dependent binding of aminoacyl-tRNA to the A-site of ribosomes during protein biosynthesis. The sequence is that of Elongation factor Tu 1 from Syntrophotalea carbinolica (strain DSM 2380 / NBRC 103641 / GraBd1) (Pelobacter carbinolicus).